Consider the following 369-residue polypeptide: Histidinol-phosphate aminotransferase (369 aa).

The interval 1-39 (MSFGIDDLPVRDELRGKSPYGAPQLDVPVRLNTNENPYP) is disordered. Residue Lys230 is modified to N6-(pyridoxal phosphate)lysine.

The protein belongs to the class-II pyridoxal-phosphate-dependent aminotransferase family. Histidinol-phosphate aminotransferase subfamily. Homodimer. The cofactor is pyridoxal 5'-phosphate.

It carries out the reaction L-histidinol phosphate + 2-oxoglutarate = 3-(imidazol-4-yl)-2-oxopropyl phosphate + L-glutamate. Its pathway is amino-acid biosynthesis; L-histidine biosynthesis; L-histidine from 5-phospho-alpha-D-ribose 1-diphosphate: step 7/9. The sequence is that of Histidinol-phosphate aminotransferase (hisC) from Streptomyces avermitilis (strain ATCC 31267 / DSM 46492 / JCM 5070 / NBRC 14893 / NCIMB 12804 / NRRL 8165 / MA-4680).